The following is a 189-amino-acid chain: Potassium-transporting ATPase KdpC subunit (189 aa).

Residues 6–26 form a helical membrane-spanning segment; sequence PAILLFIMFTIICGGIYPALV.

This sequence belongs to the KdpC family. In terms of assembly, the system is composed of three essential subunits: KdpA, KdpB and KdpC.

The protein resides in the cell inner membrane. Functionally, part of the high-affinity ATP-driven potassium transport (or Kdp) system, which catalyzes the hydrolysis of ATP coupled with the electrogenic transport of potassium into the cytoplasm. This subunit acts as a catalytic chaperone that increases the ATP-binding affinity of the ATP-hydrolyzing subunit KdpB by the formation of a transient KdpB/KdpC/ATP ternary complex. The chain is Potassium-transporting ATPase KdpC subunit from Trichlorobacter lovleyi (strain ATCC BAA-1151 / DSM 17278 / SZ) (Geobacter lovleyi).